The sequence spans 345 residues: MKKVAMLGAGSWGTALSLVLADNGHQVMMWGHRAELIDQINELHENKDYLPGVELSSSIIGTADLSEALKGADFIIVAVPTKAIREVLKKALPYIPKQSIFVHVSKGIEPDSLLRISELMEEELPEEYRKDIVVLSGPSHAEEVGLRHPTTVTSSSKNIKAAEAVQDLFMNQHFRVYTNPDMIGVEIGGALKNIIALAAGITDGLGYGDNAKAALITRGLAEIARLGTKMGGNPLTFSGLTGVGDLIVTCTSVHSRNWRAGNLLGKGYKLEAVLDKMGMVVEGVRTTKAAYQLSQKYQVKMPITEALHQVLFNGQKVETAVESLMARVKTHEMEDLVNTFENRVK.

Serine 11, tryptophan 12, histidine 32, arginine 33, and lysine 106 together coordinate NADPH. Residues lysine 106, glycine 137, and serine 139 each contribute to the sn-glycerol 3-phosphate site. Residue alanine 141 participates in NADPH binding. Sn-glycerol 3-phosphate contacts are provided by lysine 192, aspartate 245, serine 255, arginine 256, and asparagine 257. Catalysis depends on lysine 192, which acts as the Proton acceptor. Arginine 256 provides a ligand contact to NADPH. NADPH contacts are provided by valine 280 and glutamate 282.

It belongs to the NAD-dependent glycerol-3-phosphate dehydrogenase family.

It is found in the cytoplasm. The catalysed reaction is sn-glycerol 3-phosphate + NAD(+) = dihydroxyacetone phosphate + NADH + H(+). It catalyses the reaction sn-glycerol 3-phosphate + NADP(+) = dihydroxyacetone phosphate + NADPH + H(+). It participates in membrane lipid metabolism; glycerophospholipid metabolism. In terms of biological role, catalyzes the reduction of the glycolytic intermediate dihydroxyacetone phosphate (DHAP) to sn-glycerol 3-phosphate (G3P), the key precursor for phospholipid synthesis. The polypeptide is Glycerol-3-phosphate dehydrogenase [NAD(P)+] (Bacillus velezensis (strain DSM 23117 / BGSC 10A6 / LMG 26770 / FZB42) (Bacillus amyloliquefaciens subsp. plantarum)).